A 111-amino-acid chain; its full sequence is UPF0145 protein BRADO6695 (111 aa).

Belongs to the UPF0145 family.

This chain is UPF0145 protein BRADO6695, found in Bradyrhizobium sp. (strain ORS 278).